We begin with the raw amino-acid sequence, 415 residues long: Beta-1,4-glucuronyltransferase 1 (415 aa).

The Cytoplasmic portion of the chain corresponds to 1–8 (MQMSYAIR). A helical; Signal-anchor for type II membrane protein membrane pass occupies residues 9–36 (CAFYQLLLAALMLVAMLQLLYLSLLSGL). The Lumenal segment spans residues 37 to 415 (HGQEEQEQYF…ARYPNSPHRC (379 aa)). N-linked (GlcNAc...) asparagine glycosylation is present at Asn204. Residues Asp227 and Asp229 each coordinate Mn(2+). Residue Asn300 is glycosylated (N-linked (GlcNAc...) asparagine).

This sequence belongs to the glycosyltransferase 49 family. As to quaternary structure, interacts with LARGE1 and LARGE2. Mn(2+) serves as cofactor.

The protein resides in the golgi apparatus membrane. The enzyme catalyses 3-O-[beta-D-Xyl-(1-&gt;4)-Rib-ol-P-Rib-ol-P-3-beta-D-GalNAc-(1-&gt;3)-beta-D-GlcNAc-(1-&gt;4)-(O-6-P-alpha-D-Man)]-Thr-[protein] + UDP-alpha-D-glucuronate = 3-O-[beta-D-GlcA-(1-&gt;3)-beta-D-Xyl-(1-&gt;4)-Rib-ol-P-Rib-ol-P-3-beta-D-GalNAc-(1-&gt;3)-beta-D-GlcNAc-(1-&gt;4)-(O-6-P-alpha-D-Man)]-Thr-[protein] + UDP + H(+). It functions in the pathway protein modification; protein glycosylation. Functionally, beta-1,4-glucuronyltransferase involved in O-mannosylation of alpha-dystroglycan (DAG1). Transfers a glucuronic acid (GlcA) residue onto a xylose (Xyl) acceptor to produce the glucuronyl-beta-1,4-xylose-beta disaccharide primer, which is further elongated by LARGE1, during synthesis of phosphorylated O-mannosyl glycan. Phosphorylated O-mannosyl glycan is a carbohydrate structure present in alpha-dystroglycan (DAG1), which is required for binding laminin G-like domain-containing extracellular proteins with high affinity. Required for axon guidance; via its function in O-mannosylation of alpha-dystroglycan (DAG1). The chain is Beta-1,4-glucuronyltransferase 1 from Mus musculus (Mouse).